A 497-amino-acid polypeptide reads, in one-letter code: Probable cytosol aminopeptidase (497 aa).

Positions 267 and 272 each coordinate Mn(2+). The active site involves Lys279. Mn(2+)-binding residues include Asp290, Asp349, and Glu351. Arg353 is a catalytic residue.

It belongs to the peptidase M17 family. Mn(2+) serves as cofactor.

Its subcellular location is the cytoplasm. The enzyme catalyses Release of an N-terminal amino acid, Xaa-|-Yaa-, in which Xaa is preferably Leu, but may be other amino acids including Pro although not Arg or Lys, and Yaa may be Pro. Amino acid amides and methyl esters are also readily hydrolyzed, but rates on arylamides are exceedingly low.. It catalyses the reaction Release of an N-terminal amino acid, preferentially leucine, but not glutamic or aspartic acids.. In terms of biological role, presumably involved in the processing and regular turnover of intracellular proteins. Catalyzes the removal of unsubstituted N-terminal amino acids from various peptides. This is Probable cytosol aminopeptidase from Pseudomonas putida (strain GB-1).